The primary structure comprises 441 residues: Ribosomal protein uS12 methylthiotransferase RimO (441 aa).

The region spanning P7–P117 is the MTTase N-terminal domain. [4Fe-4S] cluster contacts are provided by C16, C52, C81, C148, C152, and C155. The 238-residue stretch at L134–R371 folds into the Radical SAM core domain. Residues K374–G440 form the TRAM domain.

The protein belongs to the methylthiotransferase family. RimO subfamily. It depends on [4Fe-4S] cluster as a cofactor.

Its subcellular location is the cytoplasm. The catalysed reaction is L-aspartate(89)-[ribosomal protein uS12]-hydrogen + (sulfur carrier)-SH + AH2 + 2 S-adenosyl-L-methionine = 3-methylsulfanyl-L-aspartate(89)-[ribosomal protein uS12]-hydrogen + (sulfur carrier)-H + 5'-deoxyadenosine + L-methionine + A + S-adenosyl-L-homocysteine + 2 H(+). In terms of biological role, catalyzes the methylthiolation of an aspartic acid residue of ribosomal protein uS12. This Rhodopseudomonas palustris (strain BisB18) protein is Ribosomal protein uS12 methylthiotransferase RimO.